The primary structure comprises 410 residues: Tryptophan synthase beta chain (410 aa).

An N6-(pyridoxal phosphate)lysine modification is found at Lys98.

The protein belongs to the TrpB family. As to quaternary structure, tetramer of two alpha and two beta chains. The cofactor is pyridoxal 5'-phosphate.

It catalyses the reaction (1S,2R)-1-C-(indol-3-yl)glycerol 3-phosphate + L-serine = D-glyceraldehyde 3-phosphate + L-tryptophan + H2O. It participates in amino-acid biosynthesis; L-tryptophan biosynthesis; L-tryptophan from chorismate: step 5/5. In terms of biological role, the beta subunit is responsible for the synthesis of L-tryptophan from indole and L-serine. This is Tryptophan synthase beta chain from Dinoroseobacter shibae (strain DSM 16493 / NCIMB 14021 / DFL 12).